Reading from the N-terminus, the 120-residue chain is U13-lycotoxin-Ls1e (120 aa).

Residues 1–16 form the signal peptide; that stretch reads MKILFVLISILYAVYC. Positions 17–54 are excised as a propeptide; the sequence is FSSEEDVDSAYLANELEPVEDINSEQYAALEPKEEQER. Intrachain disulfides connect Cys-56/Cys-70, Cys-63/Cys-76, Cys-69/Cys-87, and Cys-78/Cys-85. In terms of domain architecture, Agouti spans 56–95; sequence CAGMGRDCKDDCDCCLNIATCNCWFGRYFCSCTFGDYQTC.

The protein belongs to the neurotoxin 05 (agouti) family. In terms of processing, contains 6 disulfide bonds. As to expression, expressed by the venom gland.

The protein resides in the secreted. This chain is U13-lycotoxin-Ls1e, found in Lycosa singoriensis (Wolf spider).